The following is a 101-amino-acid chain: CRISPR-associated endoribonuclease Cas2 (101 aa).

Aspartate 8 contacts Mg(2+).

It belongs to the CRISPR-associated endoribonuclease Cas2 protein family. As to quaternary structure, homodimer, forms a heterotetramer with a Cas1 homodimer. Mg(2+) is required as a cofactor.

CRISPR (clustered regularly interspaced short palindromic repeat), is an adaptive immune system that provides protection against mobile genetic elements (viruses, transposable elements and conjugative plasmids). CRISPR clusters contain sequences complementary to antecedent mobile elements and target invading nucleic acids. CRISPR clusters are transcribed and processed into CRISPR RNA (crRNA). Functions as a ssRNA-specific endoribonuclease. Involved in the integration of spacer DNA into the CRISPR cassette. In Ligilactobacillus salivarius (strain UCC118) (Lactobacillus salivarius), this protein is CRISPR-associated endoribonuclease Cas2.